A 379-amino-acid chain; its full sequence is Queuine tRNA-ribosyltransferase (379 aa).

Asp-94 serves as the catalytic Proton acceptor. Substrate-binding positions include 94-98 (DSGGF), Asp-148, Gln-191, and Gly-218. The interval 249–255 (GVGSPDS) is RNA binding. Catalysis depends on Asp-268, which acts as the Nucleophile. The segment at 273–277 (TRIAR) is RNA binding; important for wobble base 34 recognition. The Zn(2+) site is built by Cys-306, Cys-308, Cys-311, and His-337.

The protein belongs to the queuine tRNA-ribosyltransferase family. Homodimer. Within each dimer, one monomer is responsible for RNA recognition and catalysis, while the other monomer binds to the replacement base PreQ1. Requires Zn(2+) as cofactor.

It carries out the reaction 7-aminomethyl-7-carbaguanine + guanosine(34) in tRNA = 7-aminomethyl-7-carbaguanosine(34) in tRNA + guanine. The protein operates within tRNA modification; tRNA-queuosine biosynthesis. Functionally, catalyzes the base-exchange of a guanine (G) residue with the queuine precursor 7-aminomethyl-7-deazaguanine (PreQ1) at position 34 (anticodon wobble position) in tRNAs with GU(N) anticodons (tRNA-Asp, -Asn, -His and -Tyr). Catalysis occurs through a double-displacement mechanism. The nucleophile active site attacks the C1' of nucleotide 34 to detach the guanine base from the RNA, forming a covalent enzyme-RNA intermediate. The proton acceptor active site deprotonates the incoming PreQ1, allowing a nucleophilic attack on the C1' of the ribose to form the product. After dissociation, two additional enzymatic reactions on the tRNA convert PreQ1 to queuine (Q), resulting in the hypermodified nucleoside queuosine (7-(((4,5-cis-dihydroxy-2-cyclopenten-1-yl)amino)methyl)-7-deazaguanosine). This chain is Queuine tRNA-ribosyltransferase, found in Listeria monocytogenes serotype 4a (strain HCC23).